The sequence spans 356 residues: Protein pelota homolog (356 aa).

It belongs to the eukaryotic release factor 1 family. Pelota subfamily. As to quaternary structure, monomer. Requires a divalent metal cation as cofactor.

The protein localises to the cytoplasm. In terms of biological role, may function in recognizing stalled ribosomes, interact with stem-loop structures in stalled mRNA molecules, and effect endonucleolytic cleavage of the mRNA. May play a role in the release non-functional ribosomes and degradation of damaged mRNAs. Has endoribonuclease activity. The sequence is that of Protein pelota homolog from Aeropyrum pernix (strain ATCC 700893 / DSM 11879 / JCM 9820 / NBRC 100138 / K1).